Consider the following 90-residue polypeptide: UPF0297 protein lmo1503 (90 aa).

Belongs to the UPF0297 family.

The chain is UPF0297 protein lmo1503 from Listeria monocytogenes serovar 1/2a (strain ATCC BAA-679 / EGD-e).